Reading from the N-terminus, the 312-residue chain is Transcription initiation factor IIB (312 aa).

A TFIIB-type zinc finger spans residues 10 to 42; that stretch reads FVQTCSDCGETQNIVEDYKNGYHVCGRCGCIVG. Zn(2+) is bound by residues Cys14, Cys17, Cys34, and Cys37. 2 tandem repeats follow at residues 120-196 and 213-290.

Belongs to the TFIIB family. As to quaternary structure, associates with TFIID-IIA (DA complex) to form TFIID-IIA-IIB (DAB-complex) which is then recognized by polymerase II.

The protein localises to the nucleus. Functionally, general factor that plays a major role in the activation of eukaryotic genes transcribed by RNA polymerase II. The chain is Transcription initiation factor IIB from Encephalitozoon cuniculi (strain GB-M1) (Microsporidian parasite).